The following is a 302-amino-acid chain: Dihydroorotate dehydrogenase B (NAD(+)), catalytic subunit (302 aa).

FMN contacts are provided by residues serine 23 and lysine 47–glycine 48. Residues lysine 47 and asparagine 71–leucine 75 contribute to the substrate site. Residues asparagine 101 and asparagine 128 each contribute to the FMN site. Residue asparagine 128 participates in substrate binding. Cysteine 131 acts as the Nucleophile in catalysis. FMN is bound by residues lysine 166 and isoleucine 192. Substrate is bound at residue asparagine 193–threonine 194. FMN-binding positions include glycine 218, glycine 244–glycine 245, and glycine 266–threonine 267.

It belongs to the dihydroorotate dehydrogenase family. Type 1 subfamily. Heterotetramer of 2 PyrK and 2 PyrD type B subunits. FMN is required as a cofactor.

The protein localises to the cytoplasm. The enzyme catalyses (S)-dihydroorotate + NAD(+) = orotate + NADH + H(+). It functions in the pathway pyrimidine metabolism; UMP biosynthesis via de novo pathway; orotate from (S)-dihydroorotate (NAD(+) route): step 1/1. Functionally, catalyzes the conversion of dihydroorotate to orotate with NAD(+) as electron acceptor. The sequence is that of Dihydroorotate dehydrogenase B (NAD(+)), catalytic subunit (pyrD) from Alkaliphilus oremlandii (strain OhILAs) (Clostridium oremlandii (strain OhILAs)).